We begin with the raw amino-acid sequence, 216 residues long: Somatotropin (216 aa).

The first 26 residues, 1 to 26, serve as a signal peptide directing secretion; sequence MAADSQTSRLLTFTLLCLLWPQEAGA. Residue His-45 coordinates Zn(2+). An intrachain disulfide couples Cys-78 to Cys-189. Ser-131 bears the Phosphoserine mark. Glu-198 contacts Zn(2+). A disulfide bond links Cys-206 and Cys-214.

The protein belongs to the somatotropin/prolactin family.

The protein resides in the secreted. In terms of biological role, plays an important role in growth control. Its major role in stimulating body growth is to stimulate the liver and other tissues to secrete IGF1. It stimulates both the differentiation and proliferation of myoblasts. It also stimulates amino acid uptake and protein synthesis in muscle and other tissues. The protein is Somatotropin (GH1) of Mesocricetus auratus (Golden hamster).